Here is a 286-residue protein sequence, read N- to C-terminus: 2-dehydro-3-deoxyphosphooctonate aldolase (286 aa).

Belongs to the KdsA family.

It localises to the cytoplasm. It carries out the reaction D-arabinose 5-phosphate + phosphoenolpyruvate + H2O = 3-deoxy-alpha-D-manno-2-octulosonate-8-phosphate + phosphate. The protein operates within carbohydrate biosynthesis; 3-deoxy-D-manno-octulosonate biosynthesis; 3-deoxy-D-manno-octulosonate from D-ribulose 5-phosphate: step 2/3. It participates in bacterial outer membrane biogenesis; lipopolysaccharide biosynthesis. This is 2-dehydro-3-deoxyphosphooctonate aldolase from Shewanella denitrificans (strain OS217 / ATCC BAA-1090 / DSM 15013).